The following is a 170-amino-acid chain: Lipoprotein signal peptidase (170 aa).

Helical transmembrane passes span 11–31, 41–61, 69–89, and 95–115; these read LGWL…KAHF, IVVI…AAFS, WQRW…VVWL, and DDTW…GNLY. Active-site residues include Asp-125 and Asp-144. The helical transmembrane segment at 136–156 threads the bilayer; the sequence is YFPAFNFADSAITVGAIMLAL.

Belongs to the peptidase A8 family.

It localises to the cell inner membrane. It catalyses the reaction Release of signal peptides from bacterial membrane prolipoproteins. Hydrolyzes -Xaa-Yaa-Zaa-|-(S,diacylglyceryl)Cys-, in which Xaa is hydrophobic (preferably Leu), and Yaa (Ala or Ser) and Zaa (Gly or Ala) have small, neutral side chains.. It participates in protein modification; lipoprotein biosynthesis (signal peptide cleavage). This protein specifically catalyzes the removal of signal peptides from prolipoproteins. The sequence is that of Lipoprotein signal peptidase from Pseudomonas fluorescens.